The following is a 616-amino-acid chain: Carboxylic acid transporter protein homolog (616 aa).

The segment covering 1-11 (MSSSITDEKIS) has biased composition (basic and acidic residues). Positions 1 to 65 (MSSSITDEKI…LYHNPSLPAQ (65 aa)) are disordered. Serine 2 bears the N-acetylserine mark. The Cytoplasmic portion of the chain corresponds to 2–140 (SSSITDEKIS…LRKMTWQNWN (139 aa)). Serine 4 bears the Phosphoserine mark. Residue lysine 9 forms a Glycyl lysine isopeptide (Lys-Gly) (interchain with G-Cter in ubiquitin) linkage. Residues serine 11, serine 61, and serine 66 each carry the phosphoserine modification. Threonine 70 is modified (phosphothreonine). Residues 141–161 (YFFMGYFAWLSAAWAFFCVSV) traverse the membrane as a helical segment. Residues 162-176 (SVAPLAELYDRPTKD) are Extracellular-facing. Residues 177–197 (ITWGLGLVLFVRSAGAVIFGL) traverse the membrane as a helical segment. The Cytoplasmic segment spans residues 198–205 (WTDKSSRK). A helical transmembrane segment spans residues 206–226 (WPYITCLFLFVIAQLCTPWCD). Over 227-230 (TYEK) the chain is Extracellular. Residues 231 to 251 (FLGVRWITGIAMGGIYGCASA) form a helical membrane-spanning segment. Residues 252–263 (TAIEDAPVKARS) lie on the Cytoplasmic side of the membrane. Residues 264-284 (FLSGLFFSAYAMGFIFAIIFY) form a helical membrane-spanning segment. Topologically, residues 285–296 (RAFGYFRDDGWK) are extracellular. The chain crosses the membrane as a helical span at residues 297–317 (ILFWFSIFLPILLIFWRLLWP). At 318–363 (ETKYFTKVLKARKLILSDAVKANGGEPLPKANFKQKMVSMKRTVQK) the chain is on the cytoplasmic side. Residue lysine 338 forms a Glycyl lysine isopeptide (Lys-Gly) (interchain with G-Cter in ubiquitin) linkage. A helical membrane pass occupies residues 364 to 384 (YWLLFAYLVVLLVGPNYLTHA). The Extracellular segment spans residues 385 to 402 (SQDLLPTMLRAQLGLSKD). The chain crosses the membrane as a helical span at residues 403-423 (AVTVIVVVTNIGAICGGMIFG). The Cytoplasmic segment spans residues 424 to 432 (QFMEVTGRR). The helical transmembrane segment at 433–453 (LGLLIACTMGGCFTYPAFMLR) threads the bilayer. The Extracellular segment spans residues 454–457 (SEKA). A helical membrane pass occupies residues 458–478 (ILGAGFMLYFCVFGVWGILPI). Over 479–489 (HLAELAPADAR) the chain is Cytoplasmic. The chain crosses the membrane as a helical span at residues 490–510 (ALVAGLSYQLGNLASAAASTI). The Extracellular portion of the chain corresponds to 511 to 535 (ETQLADRYPLERDASGAVIKEDYAK). The helical transmembrane segment at 536–556 (VMAILTGSVFIFTFACVFVGH) threads the bilayer. The Cytoplasmic portion of the chain corresponds to 557–616 (EKFHRDLSSPVMKKYINQVEEYEADGLSISDIVEQKTECASVKMIDSNVSKTYEEHIETV). Residues serine 584, serine 603, and serine 606 each carry the phosphoserine modification.

The protein belongs to the major facilitator superfamily. Sugar transporter (TC 2.A.1.1) family.

The protein resides in the membrane. Functionally, essential to lactate transport. This is Carboxylic acid transporter protein homolog (JEN1) from Saccharomyces cerevisiae (strain ATCC 204508 / S288c) (Baker's yeast).